The chain runs to 453 residues: MITLKEALKYSKEELENLKKELNEKAKKEKKIGAYIEQFLDKDLSVSGEGVPVAIKDNISVKGWELTSASKILQGYIAPYDASVIVNLKANGFSPFGRCNMDEFAMGSSTASSYYGKTLNPLNFERVPGGSSGGSAAAVAGGLALASLGSDTGGSVRQPAAFCGCVGFKPSYGRVSRYGLASYSSSLDQIGVLTQNVEDAAILYDAIAGYDKMDSTSANIEFIKTAPNLNVNKKLKIAVIENYVNDADSEVKNALLKTIDMLKANGHEIVYKNLLDSKFDIAAYYIIATAEASANLSRYDGVRYGKRSENIQNLKEMYVNTRSEGFGEEVKRRILLGTFVLSSGYYDAYYIKAQKARAFIKAKYEEILQDCDLIFMPVTPTTAFKFDTQKSPMQTYLEDVYTISVNLAGLGGISVPVAKDKEELNISAQLICKAYDEQTLLDGALSLEQMIKH.

Residues Lys56 and Ser131 each act as charge relay system in the active site. The active-site Acyl-ester intermediate is Ser155.

Belongs to the amidase family. GatA subfamily. Heterotrimer of A, B and C subunits.

It carries out the reaction L-glutamyl-tRNA(Gln) + L-glutamine + ATP + H2O = L-glutaminyl-tRNA(Gln) + L-glutamate + ADP + phosphate + H(+). Allows the formation of correctly charged Gln-tRNA(Gln) through the transamidation of misacylated Glu-tRNA(Gln) in organisms which lack glutaminyl-tRNA synthetase. The reaction takes place in the presence of glutamine and ATP through an activated gamma-phospho-Glu-tRNA(Gln). This Campylobacter jejuni subsp. jejuni serotype O:6 (strain 81116 / NCTC 11828) protein is Glutamyl-tRNA(Gln) amidotransferase subunit A.